A 617-amino-acid polypeptide reads, in one-letter code: Cytoplasmic polyadenylation element-binding protein 1 (617 aa).

Positions 1–38 are disordered; the sequence is MQSQLKACGDAPAPSCSLHHRRTISKKPSNGGNSGGGG. RRM domains follow at residues 273-377 and 394-465; these read RKVF…AWRL and RTVF…HADT. Disordered stretches follow at residues 534 to 568 and 592 to 617; these read DQTR…QNVT and NQNN…AIGY. Residues 542 to 563 are compositionally biased toward basic residues; it reads PPHHSTSHYHHRSTPSHHHNHT.

In terms of assembly, interacts with fbf-1.

In terms of biological role, cytoplasmic polyadenylation element binding protein that binds to and regulates the translation of specific mRNAs. Essential for progression through meiosis. Involved in spermatogenesis. This is Cytoplasmic polyadenylation element-binding protein 1 (cpb-1) from Caenorhabditis japonica.